We begin with the raw amino-acid sequence, 353 residues long: 2-Hydroxyacid oxidase 2 (353 aa).

The FMN hydroxy acid dehydrogenase domain occupies 2–353 (PLVCLTDFRE…NQDLIQFSRL (352 aa)). FMN is bound by residues 77 to 79 (PTG), Ser106, and Gln128. Tyr130 is an a 2-oxocarboxylate binding site. Position 156 (Thr156) interacts with FMN. Arg165 is a binding site for a 2-oxocarboxylate. Lys224 is a binding site for FMN. The active-site Proton acceptor is the His248. A 2-oxocarboxylate is bound at residue Arg251. Residues 279-283 (DGGIR) and 302-303 (GR) contribute to the FMN site. A Microbody targeting signal motif is present at residues 351–353 (SRL).

This sequence belongs to the FMN-dependent alpha-hydroxy acid dehydrogenase family. Homotetramer. The cofactor is FMN.

It is found in the peroxisome. The catalysed reaction is a (2S)-2-hydroxycarboxylate + O2 = a 2-oxocarboxylate + H2O2. It carries out the reaction 2-hydroxyhexadecanoate + O2 = 2-oxohexadecanoate + H2O2. It catalyses the reaction 2-hydroxyoctanoate + O2 = 2-oxooctanoate + H2O2. Its pathway is lipid metabolism; fatty acid metabolism. In terms of biological role, oxidase that catalyzes the oxidation of medium and long chain hydroxyacids such as 2-hydroxyhexadecanoate and 2-hydroxyoctanoate, to the correspondong 2-oxoacids. Its role in the oxidation of 2-hydroxy fatty acids may contribute to the general pathway of fatty acid alpha-oxidation. Active in vitro with the artificial electron acceptor 2,6-dichlorophenolindophenol (DCIP), but O2 is believed to be the physiological electron acceptor, leading to the production of H2O2. This is 2-Hydroxyacid oxidase 2 (HAO2) from Bos taurus (Bovine).